The following is a 254-amino-acid chain: MASLPSQSCCYQGFRHSGAPKGTLSMVKDIEVYTSYPPDKSTEYGVLILTDIVGHRFSNAQIIADQFAENGYFVMMPDLFLGDAVPLNKPGEFDMGKWRSGAYHPQGKNHLPETVDPIVEVCLSEMRSKYQCKKIGAVGYCFGGKYVVRHLIPGKMDVGYTAHPSHIDESELKGIKGPLAIAAAAKDNIFPAEKRHVSEEILQEVGFPYQINLYSGVSHGFGVRGDMNAGEVRYAMRSAFVQAVEWFNEYMKEK.

Residues C141, D187, and H219 contribute to the active site.

Belongs to the dienelactone hydrolase family.

It participates in secondary metabolite biosynthesis. Functionally, hydrolase; part of the gene cluster that mediates the biosynthesis of the tropolone class of fungal maleic anhydrides. The pathway begins with the synthesis of 3-methylorcinaldehyde by the non-reducing polyketide synthase (PKS) tropA. 3-methylorcinaldehyde is the substrate for the FAD-dependent monooxygenase tropB to yield a dearomatized hydroxycyclohexadione. The 2-oxoglutarate-dependent dioxygenase tropC then performs the oxidative ring expansion to provide the first tropolone metabolite stipitaldehyde. Trop D converts stipitaldehyde into stipitacetal which is in turn converted to stipitalide by the short-chain dehydrogenase/reductase tropE. The next steps involve tropF, tropG, tropH, tropI and tropJ to form successive tropolone maleic anhydrides including stipitaldehydic, stipitatonic and stipitatic acids. In Talaromyces stipitatus (strain ATCC 10500 / CBS 375.48 / QM 6759 / NRRL 1006) (Penicillium stipitatum), this protein is Hydrolase tropI.